The sequence spans 656 residues: Macrolide export ATP-binding/permease protein MacB (656 aa).

One can recognise an ABC transporter domain in the interval 20-258; it reads IELAGITRSF…EPDFAPHVDR (239 aa). 56–63 is an ATP binding site; it reads GASGSGKS. A run of 4 helical transmembrane segments spans residues 284-304, 531-551, 591-611, and 619-639; these read ALTL…LAIG, LTIL…IGVM, ALGG…IALF, and LLPV…FGYL.

This sequence belongs to the ABC transporter superfamily. Macrolide exporter (TC 3.A.1.122) family. In terms of assembly, homodimer.

It is found in the cell inner membrane. Non-canonical ABC transporter that contains transmembrane domains (TMD), which form a pore in the inner membrane, and an ATP-binding domain (NBD), which is responsible for energy generation. Confers resistance against macrolides. The protein is Macrolide export ATP-binding/permease protein MacB of Azoarcus sp. (strain BH72).